We begin with the raw amino-acid sequence, 270 residues long: Putative envelope-preserving system protein Rv2743c (270 aa).

A run of 2 helical transmembrane segments spans residues 50 to 72 (ALRW…ALLA) and 77 to 99 (FTSL…TLLL).

In terms of assembly, interacts with PspA and Rv2742c.

Its subcellular location is the membrane. Functionally, involved in preservation of envelope integrity and tolerance to surface stress. Reverses the inhibitory effect of PspA on ClgR activity. Facilitates intracellular growth of M.tuberculosis. In Mycobacterium tuberculosis (strain ATCC 25618 / H37Rv), this protein is Putative envelope-preserving system protein Rv2743c.